We begin with the raw amino-acid sequence, 375 residues long: Mitogen-activated protein kinase 4a (375 aa).

One can recognise a Protein kinase domain in the interval 39-325 (KPPLRPIGRG…VEAALAHPYL (287 aa)). ATP contacts are provided by residues 45–53 (IGRGAYGIV) and Lys-68. Asp-165 acts as the Proton acceptor in catalysis. Thr-197 bears the Phosphothreonine mark. Residues 197–199 (TEY) carry the TXY motif. Residue Tyr-199 is modified to Phosphotyrosine.

The protein belongs to the protein kinase superfamily. CMGC Ser/Thr protein kinase family. MAP kinase subfamily. The cofactor is Mg(2+). In terms of processing, dually phosphorylated on Thr-197 and Tyr-199, which activates the enzyme. Phosphorylated in response to pathogen-associated molecular pattern (PAMP) chitin and in response to necrotrophic fungus B.cinerea spores. Not phosphorylated in response to osmotic stress. As to expression, expressed strongly in the apical cells of caulonemal air filaments and rhizoids in fully developed plants and less strongly, but readily detectable in filamentous protonemal tissue at the edge of the plant consisting of both chloronema and caulonema. When filamentous growth of protonema is promoted, the expression is strongest in newly formed apical tip cells of protonemal tissue.

The protein resides in the cytoplasm. It localises to the nucleus. It catalyses the reaction L-seryl-[protein] + ATP = O-phospho-L-seryl-[protein] + ADP + H(+). The enzyme catalyses L-threonyl-[protein] + ATP = O-phospho-L-threonyl-[protein] + ADP + H(+). With respect to regulation, activated by threonine and tyrosine phosphorylation. Activated in response to bacterial and fungal pathogen-associated molecular patterns (PAMPs) including chitin, chitosan and peptidyl glycans (PGNs). Activation in response to chitin requires the CERK1, MEKK1a/b, MKK1a/b/c and MPK4a/b signaling pathway. Activated in response to necrotrophic fungus B.cinerea spores. Not activated in response to osmotic stress. The CERK1, MEKK1a/b, MKK1a/b/c and MPK4a/b proteins are involved in pathogen defense. The pathway induces rapid growth inhibition, cell wall depositions and accumulation of defense-related transcripts. This protein is required for innate immunity triggered by pathogen-associated molecular patterns (PAMPs). Involved in resistance to necrotrophic fungi B.cinerea and A.brassicicola. Involved in the transduction of signals from chitosan perception to the activation of defense genes. The protein is Mitogen-activated protein kinase 4a (MPK4a) of Physcomitrium patens (Spreading-leaved earth moss).